The primary structure comprises 367 residues: MCSLPRGFEPQVPEDLERRSLAELREMLKRQERLLRNEKFICKLPDKGKKIFDSFAKLKAAIAECEEVRRKSELCHPVSLDCKLRQKAIAEVDVGTDKAQNSDPILDTSSLVPGCSSVDNIKSSQTSQNQGLGRPTLEGDEETSEVEYSVNKGPASSNRDRVPPSSEASEYHLQHRVSSQAEDTSSSFDNLFIDRLQRITIADQGEQQSENASTKNLTGLSSGTQKKPHYMEVLEMRAKNPVPQLHKFKTNVLPFRQNDSSSHCQKSRSPISSEERRRRDKQHLDDITAARLLPLHHMPTQLLSIEESLALQKQRKQKYEEMQAKLAAQKLAERLNIKMRSYNPEGESSGRYREVRDEDDDWSSDEF.

Residues 15 to 40 are a coiled coil; sequence DLERRSLAELREMLKRQERLLRNEKF. Residues 29–68 form an important for transcription repressor activity region; that stretch reads KRQERLLRNEKFICKLPDKGKKIFDSFAKLKAAIAECEEV. 3 stretches are compositionally biased toward polar residues: residues 117–131, 176–185, and 205–225; these read SVDN…QNQG, RVSSQAEDTS, and GEQQ…SGTQ. Disordered regions lie at residues 117–185, 203–225, and 254–281; these read SVDN…EDTS, DQGE…SGTQ, and PFRQ…RRDK. The segment at 226-297 is interaction with Pol II; sequence KKPHYMEVLE…TAARLLPLHH (72 aa). Serine 269 is subject to Phosphoserine. Positions 298 to 313 are important for transcription repressor activity; sequence MPTQLLSIEESLALQK. A coiled-coil region spans residues 300–329; the sequence is TQLLSIEESLALQKQRKQKYEEMQAKLAAQ. Residues 314 to 339 form an interaction with Pol II region; the sequence is QRKQKYEEMQAKLAAQKLAERLNIKM. Residues 335 to 367 form a disordered region; the sequence is LNIKMRSYNPEGESSGRYREVRDEDDDWSSDEF. The span at 357–367 shows a compositional bias: acidic residues; it reads DEDDDWSSDEF.

It belongs to the GRINL1 family. In terms of assembly, component of the Pol II(G) complex, which contains the RNA polymerase II (Pol II) core complex subunits and POLR2M isoform 1. Pol II(G) appears to be an abundant form of Pol II. Post-translationally, dephosphorylated at Ser-269 by the PNUTS-PP1 complex, promoting RNA polymerase II transcription pause-release.

The protein resides in the nucleus. Appears to be a stable component of the Pol II(G) complex form of RNA polymerase II (Pol II). Pol II synthesizes mRNA precursors and many functional non-coding RNAs and is the central component of the basal RNA polymerase II transcription machinery. May play a role in the Mediator complex-dependent regulation of transcription activation. Acts as a negative regulator of transcriptional activation; this repression is relieved by the Mediator complex, which restores Pol II(G) activator-dependent transcription to a level equivalent to that of Pol II. The sequence is that of DNA-directed RNA polymerase II subunit GRINL1A (POLR2M) from Pongo abelii (Sumatran orangutan).